The following is a 503-amino-acid chain: Maturase K (503 aa).

The protein belongs to the intron maturase 2 family. MatK subfamily.

The protein localises to the plastid. It is found in the chloroplast. Functionally, usually encoded in the trnK tRNA gene intron. Probably assists in splicing its own and other chloroplast group II introns. The chain is Maturase K from Panax quinquefolius (American ginseng).